The following is a 362-amino-acid chain: Serine/threonine-protein phosphatase 2A activator 1 (362 aa).

Positions 1 to 10 (MQPHTQPPQP) are enriched in pro residues. Disordered regions lie at residues 1 to 28 (MQPH…APPR) and 339 to 362 (NVEE…PWAR). The span at 340-351 (VEERGDKNEGKG) shows a compositional bias: basic and acidic residues.

The protein belongs to the PTPA-type PPIase family.

The protein resides in the cytoplasm. The protein localises to the nucleus. The enzyme catalyses [protein]-peptidylproline (omega=180) = [protein]-peptidylproline (omega=0). Functionally, PPIases accelerate the folding of proteins. It catalyzes the cis-trans isomerization of proline imidic peptide bonds in oligopeptides. Acts as a regulatory subunit for PP2A-like phosphatases modulating their activity or substrate specificity, probably by inducing a conformational change in the catalytic subunit, a direct target of the PPIase. Can reactivate inactive phosphatase PP2A-phosphatase methylesterase complexes (PP2Ai) in presence of ATP and Mg(2+) by dissociating the inactive form from the complex. The chain is Serine/threonine-protein phosphatase 2A activator 1 (RRD1) from Cryptococcus neoformans var. neoformans serotype D (strain B-3501A) (Filobasidiella neoformans).